The following is a 205-amino-acid chain: Large ribosomal subunit protein uL4 (205 aa).

The disordered stretch occupies residues 56 to 78 (ISGTTAKPYRQKHTGRARQGSLR).

This sequence belongs to the universal ribosomal protein uL4 family. In terms of assembly, part of the 50S ribosomal subunit.

Functionally, one of the primary rRNA binding proteins, this protein initially binds near the 5'-end of the 23S rRNA. It is important during the early stages of 50S assembly. It makes multiple contacts with different domains of the 23S rRNA in the assembled 50S subunit and ribosome. Forms part of the polypeptide exit tunnel. The protein is Large ribosomal subunit protein uL4 of Ehrlichia canis (strain Jake).